The following is a 260-amino-acid chain: GTP cyclohydrolase FolE2 (260 aa).

Belongs to the GTP cyclohydrolase IV family.

The catalysed reaction is GTP + H2O = 7,8-dihydroneopterin 3'-triphosphate + formate + H(+). It functions in the pathway cofactor biosynthesis; 7,8-dihydroneopterin triphosphate biosynthesis; 7,8-dihydroneopterin triphosphate from GTP: step 1/1. Converts GTP to 7,8-dihydroneopterin triphosphate. The protein is GTP cyclohydrolase FolE2 of Desulfosudis oleivorans (strain DSM 6200 / JCM 39069 / Hxd3) (Desulfococcus oleovorans).